Reading from the N-terminus, the 420-residue chain is UDP-N-acetylglucosamine 1-carboxyvinyltransferase (420 aa).

22–23 is a binding site for phosphoenolpyruvate; sequence KN. Arg-91 provides a ligand contact to UDP-N-acetyl-alpha-D-glucosamine. Cys-115 serves as the catalytic Proton donor. A 2-(S-cysteinyl)pyruvic acid O-phosphothioketal modification is found at Cys-115. UDP-N-acetyl-alpha-D-glucosamine-binding positions include 120 to 124, 160 to 163, Asp-305, and Ile-327; these read RPVDL and KVSV.

The protein belongs to the EPSP synthase family. MurA subfamily.

It localises to the cytoplasm. It catalyses the reaction phosphoenolpyruvate + UDP-N-acetyl-alpha-D-glucosamine = UDP-N-acetyl-3-O-(1-carboxyvinyl)-alpha-D-glucosamine + phosphate. Its pathway is cell wall biogenesis; peptidoglycan biosynthesis. Its function is as follows. Cell wall formation. Adds enolpyruvyl to UDP-N-acetylglucosamine. This is UDP-N-acetylglucosamine 1-carboxyvinyltransferase from Proteus mirabilis (strain HI4320).